A 542-amino-acid polypeptide reads, in one-letter code: Calcium-dependent protein kinase 7 (542 aa).

The N-myristoyl glycine moiety is linked to residue G2. Residues 79–337 enclose the Protein kinase domain; sequence YIIGRKLGQG…AHEVLRHPWI (259 aa). ATP-binding positions include 85–93 and K108; that span reads LGQGQFGTT. Residue D203 is the Proton acceptor of the active site. Residues 343-373 are autoinhibitory domain; it reads ATDQALDPSVISRLKQFSAMNKLKKLALRVI. One can recognise an EF-hand 1 domain in the interval 380–415; it reads EEIAGLREMFKAVDTKNRGVITFGELREGLRRFGAE. Residues D393, E404, D431, N433, T435, E440, D465, D467, S469, Y471, K476, D499, N501, D503, Q505, and E510 each coordinate Ca(2+). The EF-hand 2; degenerate domain maps to 416–451; it reads FKDTEIGDIMEAAHNDNNVTIHYEEFIAATLPLNKI. EF-hand domains lie at 452–487 and 488–521; these read EREEHLLAAFTYFDKDGSGYITVDKLQRACGEHNME and DSLLEEIISEVDQNNDGQIDYAEFVAMMQGSNVG.

It belongs to the protein kinase superfamily. Ser/Thr protein kinase family. CDPK subfamily. In terms of tissue distribution, expressed in roots. Expressed in leaf sheaths.

It localises to the membrane. Its subcellular location is the cytoplasm. It is found in the cytosol. The catalysed reaction is L-seryl-[protein] + ATP = O-phospho-L-seryl-[protein] + ADP + H(+). It catalyses the reaction L-threonyl-[protein] + ATP = O-phospho-L-threonyl-[protein] + ADP + H(+). Its activity is regulated as follows. Activated by calcium. Autophosphorylation may play an important role in the regulation of the kinase activity. Its function is as follows. May play a role in signal transduction pathways that involve calcium as a second messenger. May be a signaling component in the response to gibberellin and cold stress. The sequence is that of Calcium-dependent protein kinase 7 from Oryza sativa subsp. japonica (Rice).